Reading from the N-terminus, the 412-residue chain is Alpha-ketoglutarate-dependent sulfonate dioxygenase (412 aa).

Ser52 carries the post-translational modification Phosphoserine. Fe cation is bound by residues His218 and Asp220. 2-oxoglutarate-binding residues include Thr245 and Trp352. His367 is a binding site for Fe cation. The 2-oxoglutarate site is built by Arg379 and Arg383.

It belongs to the TfdA dioxygenase family. Fe(2+) serves as cofactor.

The protein operates within organosulfur degradation; alkanesulfonate degradation. In terms of biological role, acts as an alpha-ketoglutarate-dependent dioxygenase active on sulfonates. Although taurine is a poor substrate, a variety of other sulfonates are utilized, with the best natural substrates being isethionate and taurocholate. This Saccharomyces cerevisiae (strain ATCC 204508 / S288c) (Baker's yeast) protein is Alpha-ketoglutarate-dependent sulfonate dioxygenase (JLP1).